The following is a 621-amino-acid chain: 1-deoxy-D-xylulose-5-phosphate synthase (621 aa).

Residues H80 and 121–123 (GHS) each bind thiamine diphosphate. Position 152 (D152) interacts with Mg(2+). Residues 153-154 (GA), N181, Y288, and E370 each bind thiamine diphosphate. N181 is a Mg(2+) binding site.

The protein belongs to the transketolase family. DXPS subfamily. As to quaternary structure, homodimer. Mg(2+) is required as a cofactor. It depends on thiamine diphosphate as a cofactor.

It catalyses the reaction D-glyceraldehyde 3-phosphate + pyruvate + H(+) = 1-deoxy-D-xylulose 5-phosphate + CO2. It participates in metabolic intermediate biosynthesis; 1-deoxy-D-xylulose 5-phosphate biosynthesis; 1-deoxy-D-xylulose 5-phosphate from D-glyceraldehyde 3-phosphate and pyruvate: step 1/1. Catalyzes the acyloin condensation reaction between C atoms 2 and 3 of pyruvate and glyceraldehyde 3-phosphate to yield 1-deoxy-D-xylulose-5-phosphate (DXP). The sequence is that of 1-deoxy-D-xylulose-5-phosphate synthase from Pseudoalteromonas atlantica (strain T6c / ATCC BAA-1087).